Reading from the N-terminus, the 468-residue chain is 3-isopropylmalate dehydratase large subunit (468 aa).

Residues C346, C406, and C409 each coordinate [4Fe-4S] cluster.

This sequence belongs to the aconitase/IPM isomerase family. LeuC type 1 subfamily. In terms of assembly, heterodimer of LeuC and LeuD. Requires [4Fe-4S] cluster as cofactor.

The catalysed reaction is (2R,3S)-3-isopropylmalate = (2S)-2-isopropylmalate. Its pathway is amino-acid biosynthesis; L-leucine biosynthesis; L-leucine from 3-methyl-2-oxobutanoate: step 2/4. In terms of biological role, catalyzes the isomerization between 2-isopropylmalate and 3-isopropylmalate, via the formation of 2-isopropylmaleate. This chain is 3-isopropylmalate dehydratase large subunit, found in Cyanothece sp. (strain PCC 7425 / ATCC 29141).